The primary structure comprises 78 residues: Major outer membrane lipoprotein Lpp (78 aa).

Positions methionine 1–glycine 19 are cleaved as a signal peptide. A lipid anchor (N-palmitoyl cysteine) is attached at cysteine 20. Cysteine 20 carries the S-diacylglycerol cysteine lipid modification. 2 repeats span residues asparagine 25–valine 35 and asparagine 39–valine 49. Residues leucine 28–alanine 62 are a coiled coil. At lysine 78 the chain carries N6-murein peptidoglycan lysine.

The protein belongs to the Lpp family. As to quaternary structure, homotrimer.

Its subcellular location is the cell outer membrane. It localises to the secreted. It is found in the cell wall. A highly abundant outer membrane lipoprotein that controls the distance between the inner and outer membranes. The only protein known to be covalently linked to the peptidoglycan network (PGN). Also non-covalently binds the PGN. The link between the cell outer membrane and PGN contributes to maintenance of the structural and functional integrity of the cell envelope, and maintains the correct distance between the PGN and the outer membrane. The sequence is that of Major outer membrane lipoprotein Lpp from Proteus mirabilis.